The following is a 195-amino-acid chain: Dephospho-CoA kinase (195 aa).

The DPCK domain maps to Ile-3–Asn-195. Ala-11 to Thr-16 contacts ATP.

Belongs to the CoaE family.

It localises to the cytoplasm. The enzyme catalyses 3'-dephospho-CoA + ATP = ADP + CoA + H(+). The protein operates within cofactor biosynthesis; coenzyme A biosynthesis; CoA from (R)-pantothenate: step 5/5. Functionally, catalyzes the phosphorylation of the 3'-hydroxyl group of dephosphocoenzyme A to form coenzyme A. This is Dephospho-CoA kinase from Bartonella henselae (strain ATCC 49882 / DSM 28221 / CCUG 30454 / Houston 1) (Rochalimaea henselae).